The primary structure comprises 542 residues: Protein lin-9 homolog (542 aa).

At Ala-2 the chain carries N-acetylalanine. Residues 2-296 form a sufficient for interaction with RB1 region; sequence AELDQLPDES…QKQRPSRFFM (295 aa). Lys-21 participates in a covalent cross-link: Glycyl lysine isopeptide (Lys-Gly) (interchain with G-Cter in SUMO2). Residues Ser-65 and Ser-95 each carry the phosphoserine modification. Phosphothreonine is present on residues Thr-96 and Thr-304. 2 positions are modified to phosphoserine: Ser-309 and Ser-321. A coiled-coil region spans residues 354–413; the sequence is MIKKEHIKKLREMNTEAEKLKSYSMPISIEFQRRYATIVLELEQLNKDLNKVLHKVQQYC.

It belongs to the lin-9 family. As to quaternary structure, component of the DREAM complex (also named LINC complex) at least composed of E2F4, E2F5, LIN9, LIN37, LIN52, LIN54, MYBL1, MYBL2, RBL1, RBL2, RBBP4, TFDP1 and TFDP2. The complex exists in quiescent cells where it represses cell cycle-dependent genes. It dissociates in S phase when LIN9, LIN37, LIN52 and LIN54 form a subcomplex that binds to MYBL2. Interacts with RB1. In terms of tissue distribution, expressed in thymus and testis.

It is found in the nucleus. The protein localises to the nucleoplasm. In terms of biological role, acts as a tumor suppressor. Inhibits DNA synthesis. Its ability to inhibit oncogenic transformation is mediated through its association with RB1. Plays a role in the expression of genes required for the G1/S transition. This chain is Protein lin-9 homolog (LIN9), found in Homo sapiens (Human).